A 573-amino-acid chain; its full sequence is Developmental and secondary metabolism regulator VEL1 (573 aa).

One can recognise a Velvet domain in the interval 26–220; it reads NRHLWYQLTV…ADQGCRVRIR (195 aa). The short motif at 40–45 is the Nuclear localization signal element; it reads ERARAC. The interval 222-520 is disordered; that stretch reads DVRMRKRDGK…STGGKRKHDH (299 aa). Basic and acidic residues predominate over residues 230 to 245; it reads GKGSGFDRRGEEEYSR. Pro residues-rich tracts occupy residues 291-310 and 341-351; these read APPP…PPAA and APIPPATPTGP. The segment covering 352 to 363 has biased composition (low complexity); that stretch reads YPTSSAAPSPYA. Residues 379–389 are compositionally biased toward pro residues; it reads PPAPSASPAPP. Over residues 432–448 the composition is skewed to polar residues; the sequence is TPASQPTYSTPASQPTY. The segment covering 458–475 has biased composition (pro residues); it reads SAPPPAPYSAPAPPPPRP. A PEST region spans residues 476–504; that stretch reads SMSQSSLAPLKIASLVSPLPPIEAQTEPL.

This sequence belongs to the velvet family. VeA subfamily. Component of the heterotrimeric velvet complex composed of LAE1, VEL1 and VEL2; VEL1 acting as a bridging protein between LAE1 and VEL2. Interacts with LAE1.

The protein resides in the nucleus. Its subcellular location is the cytoplasm. In terms of biological role, component of the velvet transcription factor complex that controls sexual/asexual developmental ratio in response to light, promoting sexual development in the darkness while stimulating asexual sporulation under illumination. The velvet complex hat acts as a global regulator for secondary metabolite gene expression. Regulates expression of the carbohydrate-active enzyme gene clusters. This is Developmental and secondary metabolism regulator VEL1 from Hypocrea jecorina (strain QM6a) (Trichoderma reesei).